We begin with the raw amino-acid sequence, 304 residues long: Ribosome-inactivating protein 9 (304 aa).

Glutamate 208 is a catalytic residue.

This sequence belongs to the ribosome-inactivating protein family. Type 1 RIP subfamily. As to quaternary structure, monomer. As to expression, accumulates to high levels in seeds.

Its subcellular location is the cytoplasm. It catalyses the reaction Endohydrolysis of the N-glycosidic bond at one specific adenosine on the 28S rRNA.. In terms of biological role, possesses features of some constitutive defense agent. The coordinate Opaque-2-controlled synthesis of this protein and the major seed storage proteins (zeins) may provide the germinating seedling with both nutritional benefits and protection against pathogen invasion of the surrounding endosperm. The protein is Ribosome-inactivating protein 9 (CRIP9) of Zea mays (Maize).